The following is a 601-amino-acid chain: Oligoendopeptidase F, plasmid (601 aa).

Residue His-387 coordinates Zn(2+). Glu-388 is an active-site residue. Positions 391 and 394 each coordinate Zn(2+).

It belongs to the peptidase M3B family. Zn(2+) is required as a cofactor.

Hydrolyzes peptides containing between 7 and 17 amino acids with a rather wide specificity. The chain is Oligoendopeptidase F, plasmid (pepF1) from Lactococcus lactis subsp. cremoris (Streptococcus cremoris).